The chain runs to 148 residues: MKVILTSDVDKLGKAGEMVNAKTGFARNFLLPNKLAVQATKENIKIWEEKQAELRAIERENIKKANELKEKIENTKVKIIAKTGEGDRLFGSITSMDIEKALKEQHGLDVDKKKIEMKDNIKSLGTFNVVVKVYPDINANLEVIVDKE.

The protein belongs to the bacterial ribosomal protein bL9 family.

Functionally, binds to the 23S rRNA. The chain is Large ribosomal subunit protein bL9 from Finegoldia magna (strain ATCC 29328 / DSM 20472 / WAL 2508) (Peptostreptococcus magnus).